Reading from the N-terminus, the 167-residue chain is Insertion element IS1 1 protein InsB (167 aa).

The protein belongs to the transposase 27 family.

Absolutely required for transposition of IS1. This Escherichia coli (strain K12) protein is Insertion element IS1 1 protein InsB (insB1).